Here is a 154-residue protein sequence, read N- to C-terminus: Superoxide dismutase [Cu-Zn] (154 aa).

3 residues coordinate Cu cation: His47, His49, and His64. An intrachain disulfide couples Cys58 to Cys147. His64, His72, His81, and Asp84 together coordinate Zn(2+). A Cu cation-binding site is contributed by His121. Arg144 is a binding site for substrate.

This sequence belongs to the Cu-Zn superoxide dismutase family. As to quaternary structure, homodimer. Requires Cu cation as cofactor. Zn(2+) is required as a cofactor.

The protein resides in the cytoplasm. The catalysed reaction is 2 superoxide + 2 H(+) = H2O2 + O2. Its function is as follows. Destroys radicals which are normally produced within the cells and which are toxic to biological systems. The sequence is that of Superoxide dismutase [Cu-Zn] (sodC) from Aspergillus fumigatus (strain ATCC MYA-4609 / CBS 101355 / FGSC A1100 / Af293) (Neosartorya fumigata).